The following is a 692-amino-acid chain: MNRESKVFIESPILKEAILNTFKKLHPFLQAKNPVMFIVFLGALFTTWIFFKDLYYGVYSSFNLQISLWLWFTVLFANFAEAIAEGRGKARTDSLKKTRSNIIAKKLVGNKIENVPGTLLKIGDIVICEAGDLIPGDGEILEGIASVDESAITGESAPVVRESGGDRSAVTGGTKVLSDRIKISITAEQGRTFLDQMIALVEGAKRQKTPNEIALTMLLSGLSFIFLIAVMSLPLFAEFVAKEGGQSANLSIPILISLLVCLIPTTIAGLLSAIGISGMERLIRFNVISKSGRAIEAAGDIDILLLDKTGTITLGNREARDFYPAKGVDEKYLADVAQLSSLADETPEGRSIVILAKDKFGIRERNLSEMEGEFIPFSASTKMSGVNLKKEGKVVRKIRKGAGDSIRNYLHTLGQKISAELEETIQTISQRGSTPILITEEDRLLGVIELKDIVKGGLKERFASLRKMGIRTVMITGDNPLTAAAIAAEAGVDDFLAEATPETKLKKIREQQAKGYLVAMIGDGTNDAPALAQSDVGVAMNTGTQTAREAGNMIDLDSNPSKLIEIVEIGKQLLMTRGALTTFSIANDVAKYFAILPALFGSFYAVSEVGPLSALNLMKLGSQKSAVLSAVIFNALVIPALIPLALRGIVYKPLGADRILKRNLLIFGLGGMVIPFLGIKCIDLMLGFLGII.

4 helical membrane-spanning segments follow: residues 35-55 (VMFIVFLGALFTTWIFFKDLY), 64-84 (LQISLWLWFTVLFANFAEAIA), 213-233 (IALTMLLSGLSFIFLIAVMSL), and 254-274 (ILISLLVCLIPTTIAGLLSAI). Asp-307 functions as the 4-aspartylphosphate intermediate in the catalytic mechanism. Residues Asp-344, Glu-348, 377 to 384 (FSASTKMS), and Lys-400 each bind ATP. Residues Asp-523 and Asp-527 each contribute to the Mg(2+) site. 3 helical membrane passes run 592–612 (YFAILPALFGSFYAVSEVGPL), 626–646 (AVLSAVIFNALVIPALIPLAL), and 672–692 (MVIPFLGIKCIDLMLGFLGII).

The protein belongs to the cation transport ATPase (P-type) (TC 3.A.3) family. Type IA subfamily. The system is composed of three essential subunits: KdpA, KdpB and KdpC.

It localises to the cell inner membrane. It carries out the reaction K(+)(out) + ATP + H2O = K(+)(in) + ADP + phosphate + H(+). Its function is as follows. Part of the high-affinity ATP-driven potassium transport (or Kdp) system, which catalyzes the hydrolysis of ATP coupled with the electrogenic transport of potassium into the cytoplasm. This subunit is responsible for energy coupling to the transport system and for the release of the potassium ions to the cytoplasm. This chain is Potassium-transporting ATPase ATP-binding subunit, found in Leptospira interrogans serogroup Icterohaemorrhagiae serovar Lai (strain 56601).